We begin with the raw amino-acid sequence, 236 residues long: Syntaxin-8 (236 aa).

Over 1–215 the chain is Cytoplasmic; it reads MAPDPWFSTY…MVDRKSASCG (215 aa). A coiled-coil region spans residues 42–65; it reads VTIRALLQNLKEKIALLKDLLLRA. Positions 145–207 constitute a t-SNARE coiled-coil homology domain; it reads QKIIQEQDAG…RNETRRVNMV (63 aa). The residue at position 160 (serine 160) is a Phosphoserine. Residues 216–232 traverse the membrane as a helical; Anchor for type IV membrane protein segment; that stretch reads MIMVILLLLVAIVVVAV. At 233–236 the chain is on the vesicular side; that stretch reads WPTN.

Belongs to the syntaxin family. Forms a SNARE complex with STX7, VTI1B and VAMP8 which functions in the homotypic fusion of late endosomes. Part of the SNARE core complex containing STX7, VAMP8 and VTI1B. Interacts with VAMP8. Interacts with HECTD3. Interacts with TPC1. In terms of processing, ubiquitinated by HECTD3. Highly expressed in heart. Also found in brain, kidney, liver, lung, placenta, skeletal muscle, spleen and pancreas.

The protein localises to the membrane. Vesicle trafficking protein that functions in the early secretory pathway, possibly by mediating retrograde transport from cis-Golgi membranes to the ER. The chain is Syntaxin-8 (STX8) from Homo sapiens (Human).